The sequence spans 118 residues: Small ribosomal subunit protein uS13 (118 aa).

Residues 94–118 (SLPLRGQRTKTNARTRKGPRKPIKK) are disordered.

Belongs to the universal ribosomal protein uS13 family. In terms of assembly, part of the 30S ribosomal subunit. Forms a loose heterodimer with protein S19. Forms two bridges to the 50S subunit in the 70S ribosome.

Located at the top of the head of the 30S subunit, it contacts several helices of the 16S rRNA. In the 70S ribosome it contacts the 23S rRNA (bridge B1a) and protein L5 of the 50S subunit (bridge B1b), connecting the 2 subunits; these bridges are implicated in subunit movement. Contacts the tRNAs in the A and P-sites. The sequence is that of Small ribosomal subunit protein uS13 from Alteromonas mediterranea (strain DSM 17117 / CIP 110805 / LMG 28347 / Deep ecotype).